Consider the following 150-residue polypeptide: Catabolic 3-dehydroquinase 2 (150 aa).

Tyr23 (proton acceptor) is an active-site residue. Asn74, His80, and Asp87 together coordinate substrate. The active-site Proton donor is the His100. Substrate-binding positions include 101–102 (IT) and Arg111.

The protein belongs to the type-II 3-dehydroquinase family. As to quaternary structure, homododecamer. Adopts a ring-like structure, composed of an arrangement of two hexameric rings stacked on top of one another.

It catalyses the reaction 3-dehydroquinate = 3-dehydroshikimate + H2O. It participates in aromatic compound metabolism; 3,4-dihydroxybenzoate biosynthesis; 3,4-dihydroxybenzoate from 3-dehydroquinate: step 1/2. Is involved in the catabolism of quinate. Allows the utilization of quinate as carbon source via the beta-ketoadipate pathway. The sequence is that of Catabolic 3-dehydroquinase 2 from Aspergillus flavus (strain ATCC 200026 / FGSC A1120 / IAM 13836 / NRRL 3357 / JCM 12722 / SRRC 167).